Reading from the N-terminus, the 305-residue chain is Dihydroorotate dehydrogenase B (NAD(+)), catalytic subunit (305 aa).

FMN contacts are provided by residues Ser-23 and 47 to 48 (KG). Substrate contacts are provided by residues Lys-47 and 71–75 (NAIGL). Residues Asn-101 and Asn-129 each contribute to the FMN site. Asn-129 is a binding site for substrate. Cys-132 acts as the Nucleophile in catalysis. Residues Lys-167 and Ile-193 each contribute to the FMN site. Residue 194–195 (NT) participates in substrate binding. FMN-binding positions include Gly-219, 245 to 246 (GG), and 267 to 268 (GT).

Belongs to the dihydroorotate dehydrogenase family. Type 1 subfamily. Heterotetramer of 2 PyrK and 2 PyrD type B subunits. Requires FMN as cofactor.

The protein localises to the cytoplasm. It carries out the reaction (S)-dihydroorotate + NAD(+) = orotate + NADH + H(+). It functions in the pathway pyrimidine metabolism; UMP biosynthesis via de novo pathway; orotate from (S)-dihydroorotate (NAD(+) route): step 1/1. In terms of biological role, catalyzes the conversion of dihydroorotate to orotate with NAD(+) as electron acceptor. The sequence is that of Dihydroorotate dehydrogenase B (NAD(+)), catalytic subunit (pyrD) from Geotalea uraniireducens (strain Rf4) (Geobacter uraniireducens).